Here is a 383-residue protein sequence, read N- to C-terminus: Alkanesulfonate monooxygenase (383 aa).

The protein belongs to the SsuD family. As to quaternary structure, homotetramer.

It carries out the reaction an alkanesulfonate + FMNH2 + O2 = an aldehyde + FMN + sulfite + H2O + 2 H(+). Catalyzes the desulfonation of aliphatic sulfonates. The protein is Alkanesulfonate monooxygenase of Erwinia pyrifoliae (strain DSM 12163 / CIP 106111 / Ep16/96).